Here is a 207-residue protein sequence, read N- to C-terminus: Alpha/beta-tubulin-N-acetyltransferase 9 (207 aa).

The 146-residue stretch at 35–180 (EELQRLTASE…QEVTLRLTVS (146 aa)) folds into the N-acetyltransferase domain.

The protein belongs to the acetyltransferase family. GNAT subfamily.

The enzyme catalyses N-terminal L-methionyl-[tubulin] + acetyl-CoA = N-terminal N(alpha)-acetyl-L-methionyl-[tubulin] + CoA + H(+). Its function is as follows. N-acetyltransferase that mediates the acetylation of the N-terminal residues of alpha- and beta-tubulin. The sequence is that of Alpha/beta-tubulin-N-acetyltransferase 9 (NAT9) from Homo sapiens (Human).